Here is a 593-residue protein sequence, read N- to C-terminus: Calnexin (593 aa).

An N-terminal signal peptide occupies residues 1–20 (MEGKWLLCMLLVLGTTIVQA). The Lumenal portion of the chain corresponds to 21-482 (HEGHDDDMID…QMIEAAEERP (462 aa)). 2 residues coordinate Ca(2+): S75 and D118. N6-acetyllysine is present on K138. C161 and C195 are joined by a disulfide. An alpha-D-glucoside is bound by residues Y165, K167, Y186, and D193. The tract at residues 261 to 346 (GNLLNDMTPP…AEKPEDWDED (86 aa)) is disordered. The interval 277 to 410 (IEDPEDQKPE…RKIPNPDFFE (134 aa)) is p domain (Extended arm). Tandem repeats lie at residues 279-290 (DPEDQKPEDWDE), 296-307 (DPDAVKPDDWNE), 315-326 (DEEATKPDGWLD), 334-345 (DPDAEKPEDWDE), and 349-359 (GEWEAPQIANP). 4 X approximate repeats regions lie at residues 279 to 345 (DPED…DWDE) and 349 to 406 (GEWE…IPNP). A compositionally biased stretch (basic and acidic residues) spans 282-320 (DQKPEDWDERPKIPDPDAVKPDDWNEDAPAKIPDEEATK). Residues 324-346 (WLDDEPEYVPDPDAEKPEDWDED) show a composition bias toward acidic residues. The segment at 327–360 (DEPEYVPDPDAEKPEDWDEDMDGEWEAPQIANPK) is interaction with PPIB. C361 and C367 are disulfide-bonded. 3 consecutive repeat copies span residues 368–378 (GVWQRPMIDNP), 382–392 (GKWKPPMIDNP), and 396–406 (GIWKPRKIPNP). E426 serves as a coordination point for an alpha-D-glucoside. D437 lines the Ca(2+) pocket. Residues 483–503 (WLWVVYVLTVALPVFLVILFC) traverse the membrane as a helical segment. 2 S-palmitoyl cysteine lipidation sites follow: C503 and C504. The Cytoplasmic portion of the chain corresponds to 504–593 (CSGKKQSSPV…SPRNRKPRRE (90 aa)). The segment at 504-593 (CSGKKQSSPV…SPRNRKPRRE (90 aa)) is sufficient to mediate interaction with SGIP1. Residues 511-593 (SPVEYKKTDA…SPRNRKPRRE (83 aa)) form a disordered region. Positions 526-548 (KEEEEEKEEEKDKGDEEEEGEEK) are enriched in acidic residues. S555 is modified (phosphoserine). T563 bears the Phosphothreonine mark. Phosphoserine; by MAPK3 is present on S565. Residue S584 is modified to Phosphoserine.

The protein belongs to the calreticulin family. Interacts with MAPK3/ERK1. Interacts with KCNH2. Associates with ribosomes. Interacts with SGIP1; involved in negative regulation of endocytosis. The palmitoylated form interacts with the ribosome-translocon complex component SSR1, promoting efficient folding of glycoproteins. Interacts with SERPINA2P/SERPINA2 and with the S and Z variants of SERPINA1. Interacts with PPIB. Interacts with ZNRF4. Interacts with SMIM22. Interacts with TMX2. Interacts with TMEM35A/NACHO and CHRNA7. Interacts with reticulophagy regulators RETREG2 and RETREG3. Interacts with DNM1L; may form part of a larger protein complex at the ER-mitochondrial interface during mitochondrial fission. Interacts with ADAM7. Phosphorylated at Ser-565 by MAPK3/ERK1. Phosphorylation by MAPK3/ERK1 increases its association with ribosomes. In terms of processing, palmitoylation by DHHC6 leads to the preferential localization to the perinuclear rough ER. It mediates the association of calnexin with the ribosome-translocon complex (RTC) which is required for efficient folding of glycosylated proteins. Post-translationally, ubiquitinated, leading to proteasomal degradation. Probably ubiquitinated by ZNRF4.

Its subcellular location is the endoplasmic reticulum membrane. The protein localises to the mitochondrion membrane. It is found in the melanosome membrane. Functionally, calcium-binding protein that interacts with newly synthesized monoglucosylated glycoproteins in the endoplasmic reticulum. It may act in assisting protein assembly and/or in the retention within the ER of unassembled protein subunits. It seems to play a major role in the quality control apparatus of the ER by the retention of incorrectly folded proteins. Associated with partial T-cell antigen receptor complexes that escape the ER of immature thymocytes, it may function as a signaling complex regulating thymocyte maturation. Additionally it may play a role in receptor-mediated endocytosis at the synapse. The chain is Calnexin (CANX) from Canis lupus familiaris (Dog).